We begin with the raw amino-acid sequence, 257 residues long: Acetylglutamate kinase (257 aa).

Substrate contacts are provided by residues 43-44 (GG), arginine 65, and asparagine 157. ATP contacts are provided by residues 180–185 (DVSGIL) and 208–210 (IIT).

Belongs to the acetylglutamate kinase family. ArgB subfamily. Homodimer.

The protein localises to the cytoplasm. It carries out the reaction N-acetyl-L-glutamate + ATP = N-acetyl-L-glutamyl 5-phosphate + ADP. It functions in the pathway amino-acid biosynthesis; L-arginine biosynthesis; N(2)-acetyl-L-ornithine from L-glutamate: step 2/4. Its function is as follows. Catalyzes the ATP-dependent phosphorylation of N-acetyl-L-glutamate. The chain is Acetylglutamate kinase from Pectobacterium atrosepticum (strain SCRI 1043 / ATCC BAA-672) (Erwinia carotovora subsp. atroseptica).